Here is a 147-residue protein sequence, read N- to C-terminus: Peptide methionine sulfoxide reductase MsrB (147 aa).

In terms of domain architecture, MsrB spans 8 to 131 (KEELKKVLTE…NSASLKFIPK (124 aa)). The active-site Nucleophile is the Cys-120.

It belongs to the MsrB Met sulfoxide reductase family.

The enzyme catalyses L-methionyl-[protein] + [thioredoxin]-disulfide + H2O = L-methionyl-(R)-S-oxide-[protein] + [thioredoxin]-dithiol. In Clostridium perfringens (strain ATCC 13124 / DSM 756 / JCM 1290 / NCIMB 6125 / NCTC 8237 / Type A), this protein is Peptide methionine sulfoxide reductase MsrB.